Reading from the N-terminus, the 203-residue chain is V-type ATP synthase subunit D (203 aa).

The protein belongs to the V-ATPase D subunit family.

Produces ATP from ADP in the presence of a proton gradient across the membrane. This Chlamydia trachomatis serovar L2 (strain ATCC VR-902B / DSM 19102 / 434/Bu) protein is V-type ATP synthase subunit D.